A 57-amino-acid chain; its full sequence is UPF0391 membrane protein XOO1885 (57 aa).

The next 2 helical transmembrane spans lie at 4–24 and 33–53; these read WAII…GGMA and FLFW…MTIA.

Belongs to the UPF0391 family.

The protein resides in the cell membrane. This is UPF0391 membrane protein XOO1885 from Xanthomonas oryzae pv. oryzae (strain KACC10331 / KXO85).